The chain runs to 1094 residues: DNA polymerase delta catalytic subunit (1094 aa).

Zn(2+) is bound by residues C1003, C1006, C1016, and C1019. A CysA-type zinc finger spans residues 1003–1019 (CIGCNSSIKKPPLCNHC). Residues C1049, C1052, C1062, and C1067 each contribute to the [4Fe-4S] cluster site. The CysB motif signature appears at 1049 to 1067 (CQRCQGNLHVDVICMNRDC).

Belongs to the DNA polymerase type-B family. Heterodimer composed of a catalytic subunit POLD and a small regulatory subunit. [4Fe-4S] cluster serves as cofactor. Requires Mg(2+) as cofactor.

Its subcellular location is the nucleus. It carries out the reaction DNA(n) + a 2'-deoxyribonucleoside 5'-triphosphate = DNA(n+1) + diphosphate. The small regulatory subunit delta and PCNA1 increase POLD catalytic activity. Its function is as follows. This polymerase possesses two enzymatic activities: DNA synthesis (polymerase) and an exonucleolytic activity that degrades single-stranded DNA in the 3'- to 5'-direction. In Plasmodium falciparum (isolate K1 / Thailand), this protein is DNA polymerase delta catalytic subunit (POLD).